We begin with the raw amino-acid sequence, 501 residues long: Capsid protein (501 aa).

Residues 78-98 are disordered; that stretch reads SEEGFPVEPKTEEKDIPSTSG. A Nuclear localization signal motif is present at residues 122–125; the sequence is KRGF. A CCHC-type zinc finger spans residues 431–448; the sequence is CKCWICHEEGHYANECPK.

It belongs to the caulimoviridae capsid protein family. In terms of assembly, interacts (via nuclear localization signal) with host importin alpha.

It localises to the virion. Its subcellular location is the host nucleus. Its function is as follows. Self assembles to form an icosahedral capsid, about 50 nm in diameter, nm, composed of 420 subunits of the viral capsid protein. The capsid encapsulates the genomic dsDNA. Following virus entry into host cell, provides nuclear import of the viral genome. Virus particles do not enter the nucleus, but dock at the nuclear membrane through the interaction with host importins. The chain is Capsid protein from Cestrum parqui (CmYLCV).